Reading from the N-terminus, the 221-residue chain is Lipoprotein-releasing system ATP-binding protein LolD (221 aa).

The region spanning 6-220 is the ABC transporter domain; the sequence is LTLKNVSKHY…YKLKHGALNM (215 aa). 42 to 49 contacts ATP; that stretch reads GSSGSGKS.

Belongs to the ABC transporter superfamily. Lipoprotein translocase (TC 3.A.1.125) family. In terms of assembly, the complex is composed of two ATP-binding proteins (LolD) and two transmembrane proteins (LolC and LolE).

Its subcellular location is the cell inner membrane. Functionally, part of the ABC transporter complex LolCDE involved in the translocation of mature outer membrane-directed lipoproteins, from the inner membrane to the periplasmic chaperone, LolA. Responsible for the formation of the LolA-lipoprotein complex in an ATP-dependent manner. The protein is Lipoprotein-releasing system ATP-binding protein LolD of Rickettsia bellii (strain RML369-C).